The primary structure comprises 231 residues: Octanoyl-[acyl-carrier-protein]:protein N-octanoyltransferase LIPT2, mitochondrial (231 aa).

The region spanning 41–224 is the BPL/LPL catalytic domain; it reads GTKAGVLLVC…AFKETFKCTL (184 aa). The residue at position 43 (lysine 43) is an N6-succinyllysine. Residues 85–92, 154–156, and 167–169 each bind substrate; these read RGGLATFH, AIG, and GLA. The active-site Acyl-thioester intermediate is cysteine 185.

Belongs to the LipB family.

The protein resides in the mitochondrion. The catalysed reaction is octanoyl-[ACP] + L-lysyl-[protein] = N(6)-octanoyl-L-lysyl-[protein] + holo-[ACP] + H(+). It functions in the pathway protein modification; protein lipoylation via endogenous pathway; protein N(6)-(lipoyl)lysine from octanoyl-[acyl-carrier-protein]: step 1/2. Functionally, catalyzes the transfer of endogenously produced octanoic acid from octanoyl-acyl-carrier-protein onto the lipoyl domains of lipoate-dependent enzymes such as the protein H of the glycine cleavage system (GCSH). Lipoyl-ACP can also act as a substrate although octanoyl-ACP is likely to be the physiological substrate. In Mus musculus (Mouse), this protein is Octanoyl-[acyl-carrier-protein]:protein N-octanoyltransferase LIPT2, mitochondrial.